The following is an 83-amino-acid chain: Mu-theraphotoxin-Hhn2b 3 (83 aa).

The N-terminal stretch at 1 to 21 (MKASMFLALAGLVLLFVVCYA) is a signal peptide. Positions 22 to 48 (SESEEKEFPRELISKIFAVDDFKGEVR) are excised as a propeptide. Intrachain disulfides connect Cys-50-Cys-65, Cys-57-Cys-70, and Cys-64-Cys-77. Residue Leu-81 is modified to Leucine amide.

Belongs to the neurotoxin 10 (Hwtx-1) family. 14 (Hntx-1) subfamily. Monomer. In terms of tissue distribution, expressed by the venom gland.

It localises to the secreted. In terms of biological role, weakly blocks the rat SCN2A/SCN1B (Nav1.2/beta-1) sodium channel (IC(50)=68 uM) and the insect sodium channel para/tipE (IC(50)=4.3 uM), without altering the activation or inactivation kinetics (depressant toxin). The chain is Mu-theraphotoxin-Hhn2b 3 from Cyriopagopus hainanus (Chinese bird spider).